The chain runs to 285 residues: Bifunctional protein FolD (285 aa).

NADP(+) is bound by residues 166–168 (GAS) and isoleucine 232.

It belongs to the tetrahydrofolate dehydrogenase/cyclohydrolase family. Homodimer.

It carries out the reaction (6R)-5,10-methylene-5,6,7,8-tetrahydrofolate + NADP(+) = (6R)-5,10-methenyltetrahydrofolate + NADPH. It catalyses the reaction (6R)-5,10-methenyltetrahydrofolate + H2O = (6R)-10-formyltetrahydrofolate + H(+). Its pathway is one-carbon metabolism; tetrahydrofolate interconversion. Functionally, catalyzes the oxidation of 5,10-methylenetetrahydrofolate to 5,10-methenyltetrahydrofolate and then the hydrolysis of 5,10-methenyltetrahydrofolate to 10-formyltetrahydrofolate. The sequence is that of Bifunctional protein FolD from Vibrio vulnificus (strain CMCP6).